Consider the following 212-residue polypeptide: Imidazole glycerol phosphate synthase subunit HisH (212 aa).

The region spanning 1-210 is the Glutamine amidotransferase type-1 domain; sequence MIAVINYGAG…VRWSEAVQPK (210 aa). Residue Cys-79 is the Nucleophile of the active site. Catalysis depends on residues His-185 and Glu-187.

Heterodimer of HisH and HisF.

It is found in the cytoplasm. The enzyme catalyses 5-[(5-phospho-1-deoxy-D-ribulos-1-ylimino)methylamino]-1-(5-phospho-beta-D-ribosyl)imidazole-4-carboxamide + L-glutamine = D-erythro-1-(imidazol-4-yl)glycerol 3-phosphate + 5-amino-1-(5-phospho-beta-D-ribosyl)imidazole-4-carboxamide + L-glutamate + H(+). It carries out the reaction L-glutamine + H2O = L-glutamate + NH4(+). It functions in the pathway amino-acid biosynthesis; L-histidine biosynthesis; L-histidine from 5-phospho-alpha-D-ribose 1-diphosphate: step 5/9. In terms of biological role, IGPS catalyzes the conversion of PRFAR and glutamine to IGP, AICAR and glutamate. The HisH subunit catalyzes the hydrolysis of glutamine to glutamate and ammonia as part of the synthesis of IGP and AICAR. The resulting ammonia molecule is channeled to the active site of HisF. This is Imidazole glycerol phosphate synthase subunit HisH from Chloroflexus aurantiacus (strain ATCC 29364 / DSM 637 / Y-400-fl).